The sequence spans 453 residues: Allantoinase (453 aa).

Zn(2+) contacts are provided by H59, H61, K146, H186, H242, and D315. K146 bears the N6-carboxylysine mark.

This sequence belongs to the metallo-dependent hydrolases superfamily. Allantoinase family. As to quaternary structure, homotetramer. Requires Zn(2+) as cofactor. In terms of processing, carboxylation allows a single lysine to coordinate two zinc ions.

The enzyme catalyses (S)-allantoin + H2O = allantoate + H(+). Its pathway is nitrogen metabolism; (S)-allantoin degradation; allantoate from (S)-allantoin: step 1/1. In terms of biological role, catalyzes the conversion of allantoin (5-ureidohydantoin) to allantoic acid by hydrolytic cleavage of the five-member hydantoin ring. This is Allantoinase from Salmonella paratyphi B (strain ATCC BAA-1250 / SPB7).